The sequence spans 362 residues: F-box protein At1g54550 (362 aa).

An F-box domain is found at 1–47 (MATVTDLPDDLVREIFSRVPLTSLRAVRSTCKKWNAISKYDILGKKA).

The polypeptide is F-box protein At1g54550 (Arabidopsis thaliana (Mouse-ear cress)).